The chain runs to 106 residues: Small ribosomal subunit protein bS16 (106 aa).

This sequence belongs to the bacterial ribosomal protein bS16 family.

The chain is Small ribosomal subunit protein bS16 from Wolbachia sp. subsp. Brugia malayi (strain TRS).